The following is a 69-amino-acid chain: Small, acid-soluble spore protein I (69 aa).

The protein belongs to the SspI family.

Its subcellular location is the spore core. This is Small, acid-soluble spore protein I from Bacillus anthracis (strain A0248).